The following is a 915-amino-acid chain: Scaffold attachment factor B1 (915 aa).

Residues 1 to 24 (MAETLSGLGDSGAAGAAALSSASS) are compositionally biased toward low complexity. The segment at 1–33 (MAETLSGLGDSGAAGAAALSSASSETGTRRLSD) is disordered. A2 carries the N-acetylalanine modification. Phosphoserine is present on residues S24 and S55. One can recognise an SAP domain in the interval 31–65 (LSDLRVIDLRAELRKRNVDSSGNKSVLMERLKKAI). Residues 64 to 118 (AIEDEGGNPDEIEITSEGNKKTSKRSSKGRKPEEEGVEDNGLEENSGDGQEDVET) form a disordered region. Over residues 67–77 (DEGGNPDEIEI) the composition is skewed to acidic residues. Position 79 is a phosphoserine (S79). Acidic residues predominate over residues 98–118 (EGVEDNGLEENSGDGQEDVET). Glycyl lysine isopeptide (Lys-Gly) (interchain with G-Cter in SUMO2) cross-links involve residues K172 and K186. T188 is subject to Phosphothreonine. S195, S197, and S209 each carry phosphoserine. The interval 221-407 (LGETCKSEPV…EKGRSSCGRN (187 aa)) is disordered. Residues 225 to 234 (CKSEPVKEES) are compositionally biased toward basic and acidic residues. Residue K231 forms a Glycyl lysine isopeptide (Lys-Gly) (interchain with G-Cter in SUMO) linkage. Polar residues predominate over residues 275–286 (SESTAHAQSSKA). A compositionally biased stretch (basic and acidic residues) spans 293-309 (VKREPAEQPGDGERTDC). K294 is covalently cross-linked (Glycyl lysine isopeptide (Lys-Gly) (interchain with G-Cter in SUMO)). A compositionally biased stretch (low complexity) spans 319–330 (EQSSAASELAEA). Residues 346–359 (EARDSKEDGRKFDF) are compositionally biased toward basic and acidic residues. Positions 371–383 (ESSTSEGADQKMS) are enriched in polar residues. Residue K381 forms a Glycyl lysine isopeptide (Lys-Gly) (interchain with G-Cter in SUMO2) linkage. 2 positions are modified to phosphoserine: S383 and S384. Over residues 390-401 (DTKRLSKEEKGR) the composition is skewed to basic and acidic residues. A Glycyl lysine isopeptide (Lys-Gly) (interchain with G-Cter in SUMO2) cross-link involves residue K392. In terms of domain architecture, RRM spans 406 to 484 (RNFWVSGLSS…KMISVEKAKN (79 aa)). S415 carries the phosphoserine modification. 2 stretches are compositionally biased toward basic and acidic residues: residues 477 to 551 (ISVE…ERSR) and 559 to 570 (GTERTVVMDKSK). 3 disordered regions span residues 477–641 (ISVE…EREE), 671–708 (RERM…ERRP), and 749–915 (FDHR…TRRY). Glycyl lysine isopeptide (Lys-Gly) (interchain with G-Cter in SUMO2) cross-links involve residues K483, K514, K543, and K570. Residues 528-792 (GDDGSGEKSK…RHGGPERHGR (265 aa)) are interaction with POLR2A. Interaction with SFRS1; SFRS9 and SFRS10. Residue K578 forms a Glycyl lysine isopeptide (Lys-Gly) (interchain with G-Cter in SUMO1); alternate linkage. Residue K578 forms a Glycyl lysine isopeptide (Lys-Gly) (interchain with G-Cter in SUMO2); alternate linkage. Phosphoserine occurs at positions 580, 582, 601, and 604. The span at 581-641 (GSKERASKSQ…RMQAQWEREE (61 aa)) shows a compositional bias: basic and acidic residues. A Nuclear localization signal motif is present at residues 599 to 616 (KRSVVSFDKVKEPRKSRD). The tract at residues 599-915 (KRSVVSFDKV…PSDARFTRRY (317 aa)) is interaction with SAFB2. An N6-acetyllysine modification is found at K607. A compositionally biased stretch (basic and acidic residues) spans 749 to 796 (FDHRDRGRYPDHSVDRREGSRSMMGEREGQHYPERHGGPERHGRDSRD). R811 is modified (omega-N-methylarginine). Basic and acidic residues-rich tracts occupy residues 817–832 (PRRD…DDRS) and 841–851 (MMDRDHKRWQG). A Glycyl lysine isopeptide (Lys-Gly) (interchain with G-Cter in SUMO2) cross-link involves residue K847. An asymmetric dimethylarginine mark is found at R868, R874, and R884. Gly residues predominate over residues 892–901 (GMQGGFGGQS). The span at 905-915 (RPSDARFTRRY) shows a compositional bias: basic and acidic residues.

Monomer and homodimer. Forms heterodimers with SAFB2. Interacts with KHDRBS3. Interacts with CLK2. Interacts with POLR2A, SRSF1/ASF, SRSF9/SRp30c and SFSF10/TRA2B. Interacts with isoform 1 and isoform 2 of SRPK1 and inhibits its activity. Interacts with RBMX. Interacts with FUS. Interacts with ZBED4. In terms of processing, sumoylated by PIAS1 with SUMO1 and SUMO2/3, desumoylated by SENP1. Sumoylation is required for transcriptional repressor activity. In terms of tissue distribution, ubiquitous. Expressed at high levels in the CNS and at low levels in the liver. Expressed in a wide number of breast cancer cell lines.

The protein localises to the nucleus. Its function is as follows. Binds to scaffold/matrix attachment region (S/MAR) DNA and forms a molecular assembly point to allow the formation of a 'transcriptosomal' complex (consisting of SR proteins and RNA polymerase II) coupling transcription and RNA processing. Functions as an estrogen receptor corepressor and can also bind to the HSP27 promoter and decrease its transcription. Thereby acts as a negative regulator of cell proliferation. When associated with RBMX, binds to and stimulates transcription from the SREBF1 promoter. The chain is Scaffold attachment factor B1 (SAFB) from Homo sapiens (Human).